Here is a 395-residue protein sequence, read N- to C-terminus: Putative carbonic anhydrase 1 (395 aa).

The first 24 residues, 1-24 (MKLQGAGCVVAAVLGALFIVNVES), serve as a signal peptide directing secretion. Positions 42–365 (ISYDVRSTIG…LNDRPVFLVR (324 aa)) constitute an Alpha-carbonic anhydrase domain. Positions 139, 141, and 165 each coordinate Zn(2+).

Belongs to the alpha-carbonic anhydrase family. Zn(2+) serves as cofactor. Component of the acid-insoluble and acid-soluble organic matrix of calcified layers of the shell (at protein level).

The protein resides in the secreted. It carries out the reaction hydrogencarbonate + H(+) = CO2 + H2O. In terms of biological role, reversible hydration of carbon dioxide. The sequence is that of Putative carbonic anhydrase 1 from Lottia gigantea (Giant owl limpet).